The chain runs to 337 residues: Probable uridine nucleosidase 2 (337 aa).

Residue H260 is part of the active site.

Belongs to the IUNH family.

The protein resides in the cytoplasm. The catalysed reaction is uridine + H2O = D-ribose + uracil. Functionally, involved in pyrimidine breakdown. This is Probable uridine nucleosidase 2 (URH2) from Oryza sativa subsp. japonica (Rice).